The sequence spans 375 residues: Peroxisomal targeting signal 2 receptor (375 aa).

6 WD repeats span residues leucine 58 to aspartate 89, glutamate 102 to serine 133, lysine 172 to aspartate 203, histidine 218 to aspartate 249, alanine 281 to arginine 312, and glutamine 340 to asparagine 372.

This sequence belongs to the WD repeat peroxin-7 family. As to quaternary structure, interacts with PEX21.

It localises to the cytoplasm. The protein localises to the cytosol. The protein resides in the peroxisome matrix. Functionally, receptor required for the peroxisomal import of proteins containing a C-terminal PTS2-type peroxisomal targeting signal, such as 3-oxoacyl-CoA thiolase. Specifically binds to cargo proteins containing a PTS2 peroxisomal targeting signal in the cytosol. Cargo protein-binding triggers interaction with PEX21 and formation of a ternary complex composed of PEX21 and PEX7 along with PTS2-containing cargo proteins, which is tranlocated into peroxisomes by passing through the PEX13-PEX14 docking complex. The polypeptide is Peroxisomal targeting signal 2 receptor (Saccharomyces cerevisiae (strain ATCC 204508 / S288c) (Baker's yeast)).